We begin with the raw amino-acid sequence, 58 residues long: UPF0391 membrane protein Plav_0056 (58 aa).

2 consecutive transmembrane segments (helical) span residues 4–24 (WAAV…GGLV) and 30–50 (IAQI…IFGV).

This sequence belongs to the UPF0391 family.

It localises to the cell membrane. The chain is UPF0391 membrane protein Plav_0056 from Parvibaculum lavamentivorans (strain DS-1 / DSM 13023 / NCIMB 13966).